Consider the following 360-residue polypeptide: DNA replication and repair protein RecF (360 aa).

Position 30 to 37 (30 to 37 (GHNGSGKT)) interacts with ATP.

Belongs to the RecF family.

The protein localises to the cytoplasm. In terms of biological role, the RecF protein is involved in DNA metabolism; it is required for DNA replication and normal SOS inducibility. RecF binds preferentially to single-stranded, linear DNA. It also seems to bind ATP. In Shewanella denitrificans (strain OS217 / ATCC BAA-1090 / DSM 15013), this protein is DNA replication and repair protein RecF.